The primary structure comprises 68 residues: Peptide Hp1412 (68 aa).

The signal sequence occupies residues 1–23 (MKTHFAIFLITLFLFQMFSQSDA). Cys36 carries the cysteine amide modification. A propeptide spanning residues 40–68 (GLSDLYDLDEMFDGEISQADIDFLKELMR) is cleaved from the precursor.

Belongs to the non-disulfide-bridged peptide (NDBP) superfamily. Short antimicrobial peptide (group 4) family. In terms of tissue distribution, expressed by the venom gland.

The protein localises to the secreted. It localises to the target cell membrane. Amphipathic peptide with antimicrobial activity. This chain is Peptide Hp1412, found in Heterometrus petersii (Asian forest scorpion).